The primary structure comprises 339 residues: Anthranilate phosphoribosyltransferase (339 aa).

5-phospho-alpha-D-ribose 1-diphosphate-binding positions include G79, 82–83, T87, 89–92, 107–115, and S119; these read GD, NVST, and KHGNRAVSS. G79 provides a ligand contact to anthranilate. Residue S91 coordinates Mg(2+). N110 provides a ligand contact to anthranilate. An anthranilate-binding site is contributed by R165. Mg(2+) is bound by residues D224 and E225.

It belongs to the anthranilate phosphoribosyltransferase family. Homodimer. The cofactor is Mg(2+).

It catalyses the reaction N-(5-phospho-beta-D-ribosyl)anthranilate + diphosphate = 5-phospho-alpha-D-ribose 1-diphosphate + anthranilate. It participates in amino-acid biosynthesis; L-tryptophan biosynthesis; L-tryptophan from chorismate: step 2/5. Its function is as follows. Catalyzes the transfer of the phosphoribosyl group of 5-phosphorylribose-1-pyrophosphate (PRPP) to anthranilate to yield N-(5'-phosphoribosyl)-anthranilate (PRA). This is Anthranilate phosphoribosyltransferase from Geobacillus stearothermophilus (Bacillus stearothermophilus).